The sequence spans 110 residues: Envelope glycoprotein N (110 aa).

The N-terminal stretch at 1–17 (MTASTVALALFVASILG) is a signal peptide. Residues 18 to 80 (HCWVTANSTG…SLSSFSSVWA (63 aa)) lie on the Virion surface side of the membrane. The segment covering 28–41 (VASSTERSSPSTAG) has biased composition (polar residues). Positions 28 to 51 (VASSTERSSPSTAGLSARPSPGPT) are disordered. A helical transmembrane segment spans residues 81–101 (LINALLVVVATFFYLVYLCFF). Over 102–110 (KFVDEVVHA) the chain is Intravirion.

This sequence belongs to the herpesviridae glycoprotein N family. Interacts (via N-terminus) with gM (via N-terminus). The gM-gN heterodimer forms the gCII complex. O-glycosylated. Contains alpha 2,6-sialic acid residues. N-glycosylated.

The protein resides in the virion membrane. It localises to the host membrane. Its subcellular location is the host Golgi apparatus. The protein localises to the host trans-Golgi network. Its function is as follows. Envelope glycoprotein necessary for proper maturation of gM and modulation of its membrane fusion activity. Also plays a critical role in virion morphogenesis. The protein is Envelope glycoprotein N of Homo sapiens (Human).